Here is a 1058-residue protein sequence, read N- to C-terminus: DNA primase (1058 aa).

The CHC2-type zinc finger occupies 988–1028 (CLRFKHGRASRATARTFVALSVGANNRLCVSLCQQCFAAKC).

Belongs to the herpesviridae DNA primase family. As to quaternary structure, associates with the helicase and the primase-associated factor to form the helicase-primase factor.

It is found in the host nucleus. Functionally, essential component of the helicase/primase complex. Unwinds the DNA at the replication forks and generates single-stranded DNA for both leading and lagging strand synthesis. The primase initiates primer synthesis and thereby produces large amount of short RNA primers on the lagging strand that the polymerase elongates using dNTPs. The sequence is that of DNA primase from Homo sapiens (Human).